The chain runs to 185 residues: Serine/arginine-rich splicing factor RSZ21A (185 aa).

One can recognise an RRM domain in the interval 2-73; sequence ARVYVGNLDP…WRVELSRNAS (72 aa). The segment at 87–104 adopts a CCHC-type zinc-finger fold; sequence SKCYECGETGHFARECRL. Residues 109–185 form a disordered region; that stretch reads GGLGSGRRRS…YDNGYRRSRS (77 aa). Positions 114–131 are enriched in basic residues; the sequence is GRRRSRSRSRSRSPRYRR. 2 stretches are compositionally biased toward low complexity: residues 132-145 and 152-163; these read SPSY…PAGR and VSPARARSYSRS.

This sequence belongs to the splicing factor SR family. Extensively phosphorylated on serine residues in the RS domain. Expressed in roots, leaves and immature seeds.

It localises to the nucleus. In terms of biological role, involved in pre-mRNA splicing. This chain is Serine/arginine-rich splicing factor RSZ21A (RSZ21A), found in Oryza sativa subsp. japonica (Rice).